Reading from the N-terminus, the 165-residue chain is Nucleotide-binding protein CFF8240_1664 (165 aa).

This sequence belongs to the YajQ family.

In terms of biological role, nucleotide-binding protein. This is Nucleotide-binding protein CFF8240_1664 from Campylobacter fetus subsp. fetus (strain 82-40).